The chain runs to 831 residues: Translation initiation factor IF-2 (831 aa).

One can recognise a tr-type G domain in the interval 329–499 (TRAPVVTVMG…LLIAEMQDLK (171 aa)). The tract at residues 338-345 (GHVDHGKT) is G1. GTP is bound at residue 338-345 (GHVDHGKT). The G2 stretch occupies residues 363 to 367 (GITQH). Positions 385–388 (DTPG) are G3. Residues 385 to 389 (DTPGH) and 439 to 442 (NKID) contribute to the GTP site. Residues 439–442 (NKID) form a G4 region. A G5 region spans residues 475 to 477 (SAL).

The protein belongs to the TRAFAC class translation factor GTPase superfamily. Classic translation factor GTPase family. IF-2 subfamily.

The protein resides in the cytoplasm. Its function is as follows. One of the essential components for the initiation of protein synthesis. Protects formylmethionyl-tRNA from spontaneous hydrolysis and promotes its binding to the 30S ribosomal subunits. Also involved in the hydrolysis of GTP during the formation of the 70S ribosomal complex. This chain is Translation initiation factor IF-2, found in Rickettsia massiliae (strain Mtu5).